The sequence spans 286 residues: Shikimate dehydrogenase (NADP(+)) (286 aa).

Residues Ser-19–Ser-21 and Thr-66 each bind shikimate. Catalysis depends on Lys-70, which acts as the Proton acceptor. Shikimate-binding residues include Asn-91 and Asp-106. NADP(+) is bound by residues Gly-130–Ser-134 and Ala-225. Shikimate is bound at residue Tyr-227. Gly-248 is an NADP(+) binding site.

This sequence belongs to the shikimate dehydrogenase family. In terms of assembly, homodimer.

It carries out the reaction shikimate + NADP(+) = 3-dehydroshikimate + NADPH + H(+). Its pathway is metabolic intermediate biosynthesis; chorismate biosynthesis; chorismate from D-erythrose 4-phosphate and phosphoenolpyruvate: step 4/7. Involved in the biosynthesis of the chorismate, which leads to the biosynthesis of aromatic amino acids. Catalyzes the reversible NADPH linked reduction of 3-dehydroshikimate (DHSA) to yield shikimate (SA). This is Shikimate dehydrogenase (NADP(+)) from Dehalococcoides mccartyi (strain CBDB1).